The following is a 488-amino-acid chain: Proline--tRNA ligase (488 aa).

Belongs to the class-II aminoacyl-tRNA synthetase family. ProS type 3 subfamily. Homodimer.

It localises to the cytoplasm. The catalysed reaction is tRNA(Pro) + L-proline + ATP = L-prolyl-tRNA(Pro) + AMP + diphosphate. Catalyzes the attachment of proline to tRNA(Pro) in a two-step reaction: proline is first activated by ATP to form Pro-AMP and then transferred to the acceptor end of tRNA(Pro). Can inadvertently accommodate and process cysteine. This chain is Proline--tRNA ligase (proS), found in Borreliella burgdorferi (strain ATCC 35210 / DSM 4680 / CIP 102532 / B31) (Borrelia burgdorferi).